Consider the following 571-residue polypeptide: La-related protein 7 (571 aa).

Met1 carries the post-translational modification N-acetylmethionine. Over residues 1–17 (METENQKTMEESTEKRK) the composition is skewed to basic and acidic residues. Disordered stretches follow at residues 1 to 25 (METE…KRSR) and 181 to 366 (LNNP…ERHK). In terms of domain architecture, HTH La-type RNA-binding spans 23 to 117 (RSRVKQVLAD…KPLGERPKDE (95 aa)). The 79-residue stretch at 120-198 (RTVYVELLPK…PRKPGIFPKT (79 aa)) folds into the RRM domain. Basic residues predominate over residues 214 to 223 (KKKKKKKGRI). A Glycyl lysine isopeptide (Lys-Gly) (interchain with G-Cter in SUMO2) cross-link involves residue Lys232. Position 252 is a phosphothreonine (Thr252). Phosphoserine occurs at positions 254 and 257. The residue at position 261 (Thr261) is a Phosphothreonine. Residues 287 to 296 (KAGKRERSSA) are compositionally biased toward basic and acidic residues. Phosphoserine occurs at positions 294, 295, and 335. Thr336 is modified (phosphothreonine). Residues 342-351 (PGDRKGDSLS) are compositionally biased toward basic and acidic residues. A Phosphoserine modification is found at Ser349. The segment covering 352–365 (KGKRKHKKKHKERH) has biased composition (basic residues). Lys408 is covalently cross-linked (Glycyl lysine isopeptide (Lys-Gly) (interchain with G-Cter in SUMO2)). Residues 411 to 432 (SEMETESKAPPGSGQQCSTQEK) are disordered. The span at 423-432 (SGQQCSTQEK) shows a compositional bias: polar residues. The 114-residue stretch at 439–552 (QFVTGVIVKI…TEKLITKAEK (114 aa)) folds into the xRRM domain.

It belongs to the LARP7 family. Core component of the 7SK RNP complex, at least composed of 7SK RNA, LARP7, MEPCE, HEXIM1 (or HEXIM2) and P-TEFb (composed of CDK9 and CCNT1/cyclin-T1). Interacts with METTL16. Interacts with RBM7; upon genotoxic stress this interaction is enhanced, triggering the release of inactive P-TEFb complex from the core, yielding to P-TEFb complex activation. Associates with box C/D small nucleolar ribonucleoprotein (snoRNP) complexes.

It localises to the nucleus. The protein resides in the nucleoplasm. Its function is as follows. RNA-binding protein that specifically binds distinct small nuclear RNA (snRNAs) and regulates their processing and function. Specifically binds the 7SK snRNA (7SK RNA) and acts as a core component of the 7SK ribonucleoprotein (RNP) complex, thereby acting as a negative regulator of transcription elongation by RNA polymerase II. The 7SK RNP complex sequesters the positive transcription elongation factor b (P-TEFb) in a large inactive 7SK RNP complex preventing RNA polymerase II phosphorylation and subsequent transcriptional elongation. The 7SK RNP complex also promotes snRNA gene transcription by RNA polymerase II via interaction with the little elongation complex (LEC). LARP7 specifically binds to the highly conserved 3'-terminal U-rich stretch of 7SK RNA; on stimulation, remains associated with 7SK RNA, whereas P-TEFb is released from the complex. LARP7 also acts as a regulator of mRNA splicing fidelity by promoting U6 snRNA processing. Specifically binds U6 snRNAs and associates with a subset of box C/D RNP complexes: promotes U6 snRNA 2'-O-methylation by facilitating U6 snRNA loading into box C/D RNP complexes. U6 snRNA 2'-O-methylation is required for mRNA splicing fidelity. Binds U6 snRNAs with a 5'-CAGGG-3' sequence motif. U6 snRNA processing is required for spermatogenesis. The sequence is that of La-related protein 7 from Rattus norvegicus (Rat).